The primary structure comprises 1102 residues: Coiled-coil domain-containing protein AGAP005037 (1102 aa).

Residues 1–11 (MLIRWKSKDKS) are compositionally biased toward basic and acidic residues. Disordered regions lie at residues 1-69 (MLIR…HTLG) and 295-318 (HKSKQPTKTPYYVGTTQTLPRGMY). Residues 12 to 21 (SSSTSSSSST) show a composition bias toward low complexity. The span at 50-65 (IDDRRRSARSREDPRR) shows a compositional bias: basic and acidic residues. The stretch at 405-430 (HRIRVEHMERQLANLTGLVQKALTQN) forms a coiled coil. Disordered regions lie at residues 450–475 (RNAEATGDGTVCTREKPPKLGKSTCH) and 489–539 (DIQG…PLVM). Coiled coils occupy residues 554-579 (EVYNQLRGLQKKAMDLRTEVRTLRRL) and 614-654 (DKER…EVIN). Disordered stretches follow at residues 745-774 (LPIPDTAGTDETIKPPETHNNVNKPIPSPR), 832-958 (TKIS…CSDN), and 1031-1087 (LCGG…TLPP). Over residues 832 to 849 (TKISQSQLYPSEPVSSNV) the composition is skewed to polar residues. A compositionally biased stretch (pro residues) spans 867 to 881 (PPQPTRPTTGKPPVP). The segment covering 904–918 (TSSRSPLASPTSPHV) has biased composition (low complexity). Residues 936-958 (DCEQQQRTSEGTDSGSESVCSDN) show a composition bias toward polar residues.

This chain is Coiled-coil domain-containing protein AGAP005037, found in Anopheles gambiae (African malaria mosquito).